We begin with the raw amino-acid sequence, 195 residues long: NADH-ubiquinone oxidoreductase subunit 9 (195 aa).

Belongs to the complex I 30 kDa subunit family. Complex I is composed of about 30 different subunits.

It is found in the mitochondrion inner membrane. The enzyme catalyses a ubiquinone + NADH + 5 H(+)(in) = a ubiquinol + NAD(+) + 4 H(+)(out). Functionally, core subunit of the mitochondrial membrane respiratory chain NADH dehydrogenase (Complex I) that is believed to belong to the minimal assembly required for catalysis. Complex I functions in the transfer of electrons from NADH to the respiratory chain. The immediate electron acceptor for the enzyme is believed to be ubiquinone. The protein is NADH-ubiquinone oxidoreductase subunit 9 (NAD9) of Acanthamoeba castellanii (Amoeba).